Reading from the N-terminus, the 150-residue chain is Ribosome maturation factor RimP (150 aa).

This sequence belongs to the RimP family.

Its subcellular location is the cytoplasm. In terms of biological role, required for maturation of 30S ribosomal subunits. This is Ribosome maturation factor RimP from Francisella philomiragia subsp. philomiragia (strain ATCC 25017 / CCUG 19701 / FSC 153 / O#319-036).